Here is a 258-residue protein sequence, read N- to C-terminus: Tetraspanin-18B (258 aa).

The Cytoplasmic segment spans residues 1-25 (MGLGEASARGTSMEGDCLSCIKYLM). A helical transmembrane segment spans residues 26–46 (FVFNFLIFLGGSFLLGVGVWV). Residues 47 to 61 (VVDPTGFREIVAANP) are Extracellular-facing. The helical transmembrane segment at 62-82 (LLFTGVYIILAMGGMLFLLGF) threads the bilayer. Residues 83–94 (LGCCGAIRENKC) are Cytoplasmic-facing. Residues 95 to 115 (LLLFFFMLILIIFLAELAAAI) traverse the membrane as a helical segment. Topologically, residues 116–228 (LAFIFREHLT…SAVVDYFEMY (113 aa)) are extracellular. N-linked (GlcNAc...) asparagine glycosylation occurs at N141. Residues 229-249 (IYVAGALAIVVLTIELFAMVF) form a helical membrane-spanning segment. At 250 to 258 (AMCLFRGIQ) the chain is on the cytoplasmic side.

It belongs to the tetraspanin (TM4SF) family.

It is found in the membrane. Its function is as follows. May regulate angiogenesis through KDR/VEGFR2 and NOTCH1 pathways. This chain is Tetraspanin-18B (tspan18b), found in Danio rerio (Zebrafish).